Consider the following 375-residue polypeptide: Probable UDP-N-acetylglucosamine 2-epimerase (375 aa).

This sequence belongs to the UDP-N-acetylglucosamine 2-epimerase family.

It is found in the cytoplasm. It catalyses the reaction UDP-N-acetyl-alpha-D-glucosamine = UDP-N-acetyl-alpha-D-mannosamine. Its pathway is glycan metabolism; exopolysaccharide EPS I biosynthesis. May be involved in synthesis of N-acetyltrideoxygalactose, a component of exopolysaccharide EPS I which functions as a virulence factor. The sequence is that of Probable UDP-N-acetylglucosamine 2-epimerase (epsC) from Ralstonia nicotianae (strain ATCC BAA-1114 / GMI1000) (Ralstonia solanacearum).